A 137-amino-acid chain; its full sequence is L-ectoine synthase (137 aa).

The segment at 115 to 137 is disordered; it reads EVHDESGAYPADPELAREPVAAD.

This sequence belongs to the ectoine synthase family.

It catalyses the reaction (2S)-4-acetamido-2-aminobutanoate = L-ectoine + H2O. The protein operates within amine and polyamine biosynthesis; ectoine biosynthesis; L-ectoine from L-aspartate 4-semialdehyde: step 3/3. Functionally, catalyzes the circularization of gamma-N-acetyl-alpha,gamma-diaminobutyric acid (ADABA) to ectoine (1,4,5,6-tetrahydro-2-methyl-4-pyrimidine carboxylic acid), which is an excellent osmoprotectant. This Sphingopyxis alaskensis (strain DSM 13593 / LMG 18877 / RB2256) (Sphingomonas alaskensis) protein is L-ectoine synthase.